An 890-amino-acid polypeptide reads, in one-letter code: Alanine--tRNA ligase (890 aa).

Residues H572, H576, C674, and H678 each contribute to the Zn(2+) site.

The protein belongs to the class-II aminoacyl-tRNA synthetase family. The cofactor is Zn(2+).

It is found in the cytoplasm. It catalyses the reaction tRNA(Ala) + L-alanine + ATP = L-alanyl-tRNA(Ala) + AMP + diphosphate. Its function is as follows. Catalyzes the attachment of alanine to tRNA(Ala) in a two-step reaction: alanine is first activated by ATP to form Ala-AMP and then transferred to the acceptor end of tRNA(Ala). Also edits incorrectly charged Ser-tRNA(Ala) and Gly-tRNA(Ala) via its editing domain. This Saccharopolyspora erythraea (strain ATCC 11635 / DSM 40517 / JCM 4748 / NBRC 13426 / NCIMB 8594 / NRRL 2338) protein is Alanine--tRNA ligase.